Here is a 931-residue protein sequence, read N- to C-terminus: Protein translocase subunit SecA (931 aa).

Residues Gln-87, 105–109, and Asp-515 contribute to the ATP site; that span reads GEGKT. Zn(2+)-binding residues include Cys-915, Cys-917, Cys-926, and His-927.

Belongs to the SecA family. As to quaternary structure, monomer and homodimer. Part of the essential Sec protein translocation apparatus which comprises SecA, SecYEG and auxiliary proteins SecDF-YajC and YidC. Zn(2+) serves as cofactor.

It localises to the cell inner membrane. The protein localises to the cytoplasm. It carries out the reaction ATP + H2O + cellular proteinSide 1 = ADP + phosphate + cellular proteinSide 2.. Part of the Sec protein translocase complex. Interacts with the SecYEG preprotein conducting channel. Has a central role in coupling the hydrolysis of ATP to the transfer of proteins into and across the cell membrane, serving both as a receptor for the preprotein-SecB complex and as an ATP-driven molecular motor driving the stepwise translocation of polypeptide chains across the membrane. The protein is Protein translocase subunit SecA of Burkholderia pseudomallei (strain 1106a).